The chain runs to 169 residues: MYGIYIHDELTINDTELSMDKLCSGIVENQSKCIAVSINSSNIISDLNMSVRKIIYKFGTNRYLFYYYNSKWYTDIHHILSLMDLSLGSFISELQKYYPECDLTMWILRGDGMCIHRKLIDLETMTKIILSFNSNFTRCFKAECIYHMAIVYILIMYQIYILSLIRINT.

Residues Asn-13, Asn-29, Asn-39, and Asn-48 are each glycosylated (N-linked (GlcNAc...) asparagine; by host). The Cell attachment site motif lies at 109 to 111; it reads RGD. N-linked (GlcNAc...) asparagine; by host glycosylation occurs at Asn-135. Residues 145–165 form a helical membrane-spanning segment; it reads IYHMAIVYILIMYQIYILSLI.

The protein localises to the membrane. This is an uncharacterized protein from Acanthamoeba polyphaga (Amoeba).